A 718-amino-acid chain; its full sequence is Sodium/myo-inositol cotransporter (718 aa).

Residues 1-9 (MRAVLEAAD) lie on the Extracellular side of the membrane. Residues 10 to 29 (IAVVALYFILVMCIGFFAMW) form a helical membrane-spanning segment. Topologically, residues 30–38 (KSNRSTVSG) are cytoplasmic. A helical transmembrane segment spans residues 39–57 (YFLAGRSMTWVAIGASLFV). Topologically, residues 58-86 (SNIGSEHFIGLAGSGAASGFAVGAWEFNA) are extracellular. Residues 87–110 (LLLLQLLGWVFIPIYIRSGVYTMP) traverse the membrane as a helical segment. Topologically, residues 111 to 123 (EYLSKRFGGHRIQ) are cytoplasmic. Residues 124-144 (VYFAALSLLLYIFTKLSVDLY) traverse the membrane as a helical segment. Residues 145–157 (SGALFIQESLGWN) are Extracellular-facing. A helical membrane pass occupies residues 158-183 (LYVSVILLIGMTALLTVTGGLVAVIY). Residues 184–186 (TDT) are Cytoplasmic-facing. The helical transmembrane segment at 187–205 (LQALLMIIGALTLMVISMV) threads the bilayer. The Extracellular segment spans residues 206–303 (KIGGFEEVKR…HAKGSTLMAG (98 aa)). A glycan (N-linked (GlcNAc...) asparagine) is linked at N232. The helical transmembrane segment at 304 to 324 (FLKLLPMFIIVVPGMISRIVF) threads the bilayer. At 325-353 (ADEIACINPEHCMQVCGSRAGCSNIAYPR) the chain is on the cytoplasmic side. A helical transmembrane segment spans residues 354–376 (LVMTLVPVGLRGLMMAVMIAALM). The Extracellular portion of the chain corresponds to 377–406 (SDLDSIFNSASTIFTLDVYKLIRKSASSRE). Residues 407–430 (LMIVGRIFVAFMVVISIAWVPIIV) traverse the membrane as a helical segment. Residues 431–443 (EMQGGQMYLYIQE) are Cytoplasmic-facing. Residues 444–462 (VADYLTPPVAALFLLAIFW) traverse the membrane as a helical segment. At 463–510 (KRCNEQGAFYGGMAGFVLGAVRLILAFTYRAPECDQPDNRPGFIKDIH) the chain is on the extracellular side. Residues 511 to 532 (YMYVATALFWITGLITVIVSLL) form a helical membrane-spanning segment. Residues 533–695 (TPPPTKDQIR…QMLEETPQVK (163 aa)) lie on the Cytoplasmic side of the membrane. A phosphoserine mark is found at S594 and S632. A helical membrane pass occupies residues 696-716 (VILNIGLFAVCSLGIFMFVYF). Topologically, residues 717–718 (SL) are extracellular.

The protein belongs to the sodium:solute symporter (SSF) (TC 2.A.21) family. In terms of assembly, interacts with KCNQ2 (via the pore module). Interacts with KCNQ1; this interaction is direct. Forms coregulatory complexes with ion channels KCNQ2-KCNQ3 and KCNQ1-KCNE2. As to expression, highly expressed in kidney, placenta, and brain and at a lesser extent in thymus, lung, bladder, and testes. Expressed in the choroid plexus epithelium (at protein level).

It localises to the apical cell membrane. The protein localises to the basolateral cell membrane. The enzyme catalyses myo-inositol(out) + 2 Na(+)(out) = myo-inositol(in) + 2 Na(+)(in). It catalyses the reaction scyllo-inositol(out) + 2 Na(+)(out) = scyllo-inositol(in) + 2 Na(+)(in). Its function is as follows. Electrogenic Na(+)-coupled sugar symporter that actively transports myo-inositol and its stereoisomer scyllo-inositol across the plasma membrane, with a Na(+) to sugar coupling ratio of 2:1. Maintains myo-inositol concentration gradient that defines cell volume and fluid balance during osmotic stress, in particular in the fetoplacental unit and central nervous system. Forms coregulatory complexes with voltage-gated K(+) ion channels, allosterically altering ion selectivity, voltage dependence and gating kinetics of the channel. In turn, K(+) efflux through the channel forms a local electrical gradient that modulates electrogenic Na(+)-coupled myo-inositol influx through the transporter. Associates with KCNQ1-KCNE2 channel in the apical membrane of choroid plexus epithelium and regulates the myo-inositol gradient between blood and cerebrospinal fluid with an impact on neuron excitability. Associates with KCNQ2-KCNQ3 channel altering ion selectivity, increasing Na(+) and Cs(+) permeation relative to K(+) permeation. Provides myo-inositol precursor for biosynthesis of phosphoinositides such as PI(4,5)P2, thus indirectly affecting the activity of phosphoinositide-dependent ion channels and Ca(2+) signaling upon osmotic stress. Functionally, (Microbial infection) Functions as a retroviral receptor for M813 murine leukemia virus (MuLV) entry. The protein is Sodium/myo-inositol cotransporter (Slc5a3) of Mus musculus (Mouse).